The following is a 593-amino-acid chain: Protein PSP2 (593 aa).

The segment covering 56–65 (AGEHQRDGHQ) has biased composition (basic and acidic residues). The segment at 56–101 (AGEHQRDGHQQHPHGGHGPMNRSRFSNAGPFGGGSMGDFANHHHPL) is disordered. Serine 150 and serine 238 each carry phosphoserine. Disordered regions lie at residues 227–248 (KPFI…KPVD) and 280–593 (DSMA…DMPL). Polar residues-rich tracts occupy residues 231–241 (TKTQRSKSNPF) and 280–290 (DSMATTATGSK). Serine 340 carries the phosphoserine modification. Basic and acidic residues predominate over residues 347–402 (SKPDKSDEFKGGDEQGFEKGGDDKAQLDVSNDKDKGSETDVDKQFTFKNVEREHSM). A compositionally biased stretch (low complexity) spans 408–426 (NGNHNNNNGNFRGSNRYRG). 3 positions are modified to omega-N-methylarginine: arginine 419, arginine 425, and arginine 440. At arginine 443 the chain carries Dimethylated arginine. Arginine 447 is modified (omega-N-methylarginine). Residues 449 to 477 (GSSYNNNNNNTNDNNNNNNNSSSNNNNGS) show a composition bias toward low complexity. Polar residues-rich tracts occupy residues 486-497 (EEGLTSDSSLDA) and 505-516 (FTNSTSNTQQYS). At serine 522 the chain carries Phosphoserine. Positions 534-545 (RNNGRGNYNSSG) are enriched in low complexity. Omega-N-methylarginine occurs at positions 538, 551, and 575. A compositionally biased stretch (gly residues) spans 546 to 563 (MNGGSRGRGFGRGRGFGR). The span at 578–587 (SGNYSNYNNR) shows a compositional bias: low complexity.

The protein localises to the cytoplasm. The protein resides in the P-body. It localises to the stress granule. Its function is as follows. DNA polymerase alpha mutation suppressor. Suppressor of group II intron splicing defects of a mutation in MRS2. May play a role in mitochondrial mRNA splicing. This chain is Protein PSP2, found in Saccharomyces cerevisiae (strain ATCC 204508 / S288c) (Baker's yeast).